A 164-amino-acid chain; its full sequence is FMN reductase (NADH) RutF (164 aa).

Belongs to the non-flavoprotein flavin reductase family. RutF subfamily.

The enzyme catalyses FMNH2 + NAD(+) = FMN + NADH + 2 H(+). Catalyzes the reduction of FMN to FMNH2 which is used to reduce pyrimidine by RutA via the Rut pathway. The chain is FMN reductase (NADH) RutF from Escherichia coli O45:K1 (strain S88 / ExPEC).